The following is an 80-amino-acid chain: Large ribosomal subunit protein uL24 (80 aa).

Belongs to the universal ribosomal protein uL24 family. In terms of assembly, part of the 50S ribosomal subunit.

Its function is as follows. One of two assembly initiator proteins, it binds directly to the 5'-end of the 23S rRNA, where it nucleates assembly of the 50S subunit. In terms of biological role, one of the proteins that surrounds the polypeptide exit tunnel on the outside of the subunit. The protein is Large ribosomal subunit protein uL24 of Chlorobium phaeobacteroides (strain BS1).